Reading from the N-terminus, the 333-residue chain is MTDSAAGATEVATPATPSNKPYDATAKQKSLDKTARIPIKIVPAEKLKKPDWIRVRAATGNSRFYEIKDILRANNLVTVCEEASCPNIGECFGKGTATFMIMGDKCTRRCPFCDVGHGRPDPLDVNEPENLAKTIAELKLNYVVITSVDRDDLRDGGAQHYVDCISRTRALSPATRIEVLVPDFRGRLEKALDILQECPPDVMNHNLETVPRLYKQARPGADYAHSLKLLKDFKARNPNVPTKSGLMVGLGETDEEILEVMRDMREHDIDMLTIGQYLAPSGHHLPVLRYVHPDTFKMFEEKAYEMGFTHAAVGAMVRSSYHADQQAHEAGVV.

The tract at residues M1 to K29 is disordered. C80, C85, C91, C106, C110, C113, and S320 together coordinate [4Fe-4S] cluster. One can recognise a Radical SAM core domain in the interval C91 to T309.

This sequence belongs to the radical SAM superfamily. Lipoyl synthase family. [4Fe-4S] cluster is required as a cofactor.

The protein localises to the cytoplasm. It catalyses the reaction [[Fe-S] cluster scaffold protein carrying a second [4Fe-4S](2+) cluster] + N(6)-octanoyl-L-lysyl-[protein] + 2 oxidized [2Fe-2S]-[ferredoxin] + 2 S-adenosyl-L-methionine + 4 H(+) = [[Fe-S] cluster scaffold protein] + N(6)-[(R)-dihydrolipoyl]-L-lysyl-[protein] + 4 Fe(3+) + 2 hydrogen sulfide + 2 5'-deoxyadenosine + 2 L-methionine + 2 reduced [2Fe-2S]-[ferredoxin]. Its pathway is protein modification; protein lipoylation via endogenous pathway; protein N(6)-(lipoyl)lysine from octanoyl-[acyl-carrier-protein]: step 2/2. Functionally, catalyzes the radical-mediated insertion of two sulfur atoms into the C-6 and C-8 positions of the octanoyl moiety bound to the lipoyl domains of lipoate-dependent enzymes, thereby converting the octanoylated domains into lipoylated derivatives. The polypeptide is Lipoyl synthase (Ralstonia pickettii (strain 12J)).